We begin with the raw amino-acid sequence, 426 residues long: Trophoblast glycoprotein (426 aa).

An N-terminal signal peptide occupies residues 1-31 (MPGAGSRGPSAGDGRLRLARLALVLLGWVSA). The Extracellular segment spans residues 32–361 (SAPSSSVPSS…AVLPQSLQTS (330 aa)). Over residues 33 to 47 (APSSSVPSSSTSPAA) the composition is skewed to low complexity. Residues 33–53 (APSSSVPSSSTSPAAFLASGS) form a disordered region. Positions 53–91 (SAQPPPAERCPAACECSEAARTVKCVNRNLLEVPADLPP) constitute an LRRNT domain. Intrachain disulfides connect cysteine 62–cysteine 68 and cysteine 66–cysteine 77. LRR repeat units lie at residues 92–113 (YVRN…AFAR), 116–139 (PLAD…GAFE), 141–163 (LPGL…FAFA), 172–210 (PSPL…AALR), 215–238 (LRGL…LLAQ), 239–261 (LPSL…ASFR), and 262–281 (NLTH…VLHN). The N-linked (GlcNAc...) asparagine glycan is linked to asparagine 124. Asparagine 281 carries an N-linked (GlcNAc...) asparagine glycan. Residues 289–352 (GLAHVKVFLD…LNSSDLDCDA (64 aa)) form the LRRCT domain. 2 disulfide bridges follow: cysteine 304-cysteine 329 and cysteine 306-cysteine 350. The helical transmembrane segment at 362–382 (YVFLGIVLALIGAIFLLVLYL) threads the bilayer. Residues 383-426 (NRKGIKKWMHNIRDACRDHMEGYHYRYEINADPRLTNLSSNSDV) are Cytoplasmic-facing. Serine 424 bears the Phosphoserine mark.

Post-translationally, highly glycosylated. In terms of tissue distribution, highly expressed in embryo and placenta. In adult, expressed only in brain and ovary. Not detected in kidney small intestine, heart, spleen, testis, liver, lung, thymus and stomach.

It localises to the cell membrane. Functionally, may function as an inhibitor of Wnt/beta-catenin signaling by indirectly interacting with LRP6 and blocking Wnt3a-dependent LRP6 internalization. The sequence is that of Trophoblast glycoprotein (Tpbg) from Mus musculus (Mouse).